A 340-amino-acid chain; its full sequence is Glyceraldehyde-3-phosphate dehydrogenase (340 aa).

Residues 11–12 and G109 each bind NAD(+); that span reads TI. Position 138 to 140 (138 to 140) interacts with D-glyceraldehyde 3-phosphate; it reads SCN. C139 functions as the Nucleophile in the catalytic mechanism. An NAD(+)-binding site is contributed by R167. Residue 193–194 coordinates D-glyceraldehyde 3-phosphate; that stretch reads HA. Q300 lines the NAD(+) pocket.

The protein belongs to the glyceraldehyde-3-phosphate dehydrogenase family. Homotetramer.

The protein resides in the cytoplasm. It carries out the reaction D-glyceraldehyde 3-phosphate + phosphate + NADP(+) = (2R)-3-phospho-glyceroyl phosphate + NADPH + H(+). It catalyses the reaction D-glyceraldehyde 3-phosphate + phosphate + NAD(+) = (2R)-3-phospho-glyceroyl phosphate + NADH + H(+). The protein operates within carbohydrate degradation; glycolysis; pyruvate from D-glyceraldehyde 3-phosphate: step 1/5. The polypeptide is Glyceraldehyde-3-phosphate dehydrogenase (Metallosphaera sedula (strain ATCC 51363 / DSM 5348 / JCM 9185 / NBRC 15509 / TH2)).